The chain runs to 358 residues: Peptide chain release factor 1 (358 aa).

Position 233 is an N5-methylglutamine (Gln-233). A disordered region spans residues 286 to 309; the sequence is AELASARKSQVGTGDRSERIRTYN.

It belongs to the prokaryotic/mitochondrial release factor family. Methylated by PrmC. Methylation increases the termination efficiency of RF1.

It is found in the cytoplasm. Peptide chain release factor 1 directs the termination of translation in response to the peptide chain termination codons UAG and UAA. The chain is Peptide chain release factor 1 from Carboxydothermus hydrogenoformans (strain ATCC BAA-161 / DSM 6008 / Z-2901).